A 292-amino-acid chain; its full sequence is 4-hydroxy-tetrahydrodipicolinate synthase (292 aa).

Thr45 is a pyruvate binding site. Tyr133 serves as the catalytic Proton donor/acceptor. Residue Lys161 is the Schiff-base intermediate with substrate of the active site. Ile203 lines the pyruvate pocket.

It belongs to the DapA family. As to quaternary structure, homotetramer; dimer of dimers.

The protein localises to the cytoplasm. It catalyses the reaction L-aspartate 4-semialdehyde + pyruvate = (2S,4S)-4-hydroxy-2,3,4,5-tetrahydrodipicolinate + H2O + H(+). Its pathway is amino-acid biosynthesis; L-lysine biosynthesis via DAP pathway; (S)-tetrahydrodipicolinate from L-aspartate: step 3/4. In terms of biological role, catalyzes the condensation of (S)-aspartate-beta-semialdehyde [(S)-ASA] and pyruvate to 4-hydroxy-tetrahydrodipicolinate (HTPA). The sequence is that of 4-hydroxy-tetrahydrodipicolinate synthase from Shigella flexneri.